The chain runs to 776 residues: Ent-8-alpha-hydroxylabd-13-en-15-yl diphosphate synthase CPS4, chloroplastic (776 aa).

Residues 1 to 60 constitute a chloroplast transit peptide; that stretch reads MSFASNATGFRIPLTTCVYPSPILRFNAKVGSGSSYGTTEAQRNMKCVDGIGRSRVVAVA. Lys-226 serves as a coordination point for substrate. Positions 357 and 359 each coordinate Mg(2+). The DXDD motif signature appears at 357–360; that stretch reads DSDD. Lys-443 serves as a coordination point for substrate.

Belongs to the terpene synthase family. It depends on Mg(2+) as a cofactor.

It is found in the plastid. The protein resides in the chloroplast. The catalysed reaction is ent-8alpha-hydroxylabd-13-en-15-yl diphosphate = (2E,6E,10E)-geranylgeranyl diphosphate + H2O. Its pathway is secondary metabolite biosynthesis; terpenoid biosynthesis. Functionally, involved in diterpenoid biosynthesis. Catalyzes the conversion of all-trans-geranylgeranyl diphosphate to ent-8alpha-hydroxylabd-13-en-15-yl diphosphate. This is Ent-8-alpha-hydroxylabd-13-en-15-yl diphosphate synthase CPS4, chloroplastic from Salvia miltiorrhiza (Chinese sage).